Consider the following 946-residue polypeptide: C-1-tetrahydrofolate synthase, cytoplasmic (946 aa).

Residues 2–319 (AGQVLDGKAC…PPLPLKLLTP (318 aa)) are methylenetetrahydrofolate dehydrogenase and cyclohydrolase. Substrate is bound by residues 51–55 (YVRMK) and 98–100 (VQL). 169 to 171 (GRS) serves as a coordination point for NADP(+). Position 176 is a phosphoserine (serine 176). Serine 194 lines the NADP(+) pocket. Substrate is bound at residue 277 to 281 (PGGVG). Threonine 318 is modified (phosphothreonine). The segment at 320-946 (VPSDIDISRA…DDDGEIDGLF (627 aa)) is formyltetrahydrofolate synthetase. Serine 322 bears the Phosphoserine mark. 384 to 391 (TPLGEGKS) provides a ligand contact to ATP.

This sequence in the N-terminal section; belongs to the tetrahydrofolate dehydrogenase/cyclohydrolase family. In the C-terminal section; belongs to the formate--tetrahydrofolate ligase family. In terms of assembly, homodimer.

It is found in the cytoplasm. The protein localises to the nucleus. It catalyses the reaction (6R)-5,10-methylene-5,6,7,8-tetrahydrofolate + NADP(+) = (6R)-5,10-methenyltetrahydrofolate + NADPH. The catalysed reaction is (6R)-5,10-methenyltetrahydrofolate + H2O = (6R)-10-formyltetrahydrofolate + H(+). The enzyme catalyses (6S)-5,6,7,8-tetrahydrofolate + formate + ATP = (6R)-10-formyltetrahydrofolate + ADP + phosphate. Its pathway is one-carbon metabolism; tetrahydrofolate interconversion. Functionally, cytoplasmic isozyme of C-1-tetrahydrofolate synthase. The trifunctional enzyme catalyzes the interconversion of the one-carbon derivatives of tetrahydrofolate (THF) between different oxidation states by the enzymatic activities 10-formyltetrahydrofolate synthetase, 5,lO-methenyltetrahydrofolate cyclohydrolase, and 5,lO-methylenetetrahydrofolate dehydrogenase. Involved in the generation of one-carbon intermediates in the biosynthesis of the purine bases. The polypeptide is C-1-tetrahydrofolate synthase, cytoplasmic (ADE3) (Saccharomyces cerevisiae (strain ATCC 204508 / S288c) (Baker's yeast)).